The primary structure comprises 89 residues: N.vectensis toxin 7 (89 aa).

The signal sequence occupies residues 1 to 21 (MASFFKIAVICLVMLVVCSNA). 3 disulfides stabilise this stretch: Cys-44–Cys-77, Cys-46–Cys-69, and Cys-62–Cys-78.

As to expression, expressed in ectodermal gland cells.

Probable toxin. This Nematostella vectensis (Starlet sea anemone) protein is N.vectensis toxin 7.